The primary structure comprises 270 residues: Putative ABC transporter ATP-binding protein MG304 homolog (270 aa).

Positions 2 to 232 constitute an ABC transporter domain; it reads LNVTNLSFTY…LHLFHQHHFT (231 aa). 36–43 is an ATP binding site; sequence GHNGSGKS.

The protein belongs to the ABC transporter superfamily.

This is Putative ABC transporter ATP-binding protein MG304 homolog from Mycoplasma pneumoniae (strain ATCC 29342 / M129 / Subtype 1) (Mycoplasmoides pneumoniae).